Here is a 393-residue protein sequence, read N- to C-terminus: Pyridinium-3,5-bisthiocarboxylic acid mononucleotide nickel insertion protein (393 aa).

This sequence belongs to the LarC family.

It carries out the reaction Ni(II)-pyridinium-3,5-bisthiocarboxylate mononucleotide = pyridinium-3,5-bisthiocarboxylate mononucleotide + Ni(2+). In terms of biological role, involved in the biosynthesis of a nickel-pincer cofactor ((SCS)Ni(II) pincer complex). Binds Ni(2+), and functions in nickel delivery to pyridinium-3,5-bisthiocarboxylic acid mononucleotide (P2TMN), to form the mature cofactor. Is thus probably required for the activation of nickel-pincer cofactor-dependent enzymes. The polypeptide is Pyridinium-3,5-bisthiocarboxylic acid mononucleotide nickel insertion protein (Nocardioides sp. (strain ATCC BAA-499 / JS614)).